Reading from the N-terminus, the 398-residue chain is Phosphoglycerate kinase (398 aa).

Substrate is bound by residues 23–25 (DLN), Arg-38, 61–64 (HFGR), Arg-119, and Arg-152. ATP is bound by residues Lys-202, Glu-324, and 354–357 (GGDT).

The protein belongs to the phosphoglycerate kinase family. As to quaternary structure, monomer.

It is found in the cytoplasm. It catalyses the reaction (2R)-3-phosphoglycerate + ATP = (2R)-3-phospho-glyceroyl phosphate + ADP. It participates in carbohydrate degradation; glycolysis; pyruvate from D-glyceraldehyde 3-phosphate: step 2/5. This Bradyrhizobium diazoefficiens (strain JCM 10833 / BCRC 13528 / IAM 13628 / NBRC 14792 / USDA 110) protein is Phosphoglycerate kinase.